The primary structure comprises 666 residues: DNA mismatch repair protein MutL (666 aa).

It belongs to the DNA mismatch repair MutL/HexB family.

Functionally, this protein is involved in the repair of mismatches in DNA. It is required for dam-dependent methyl-directed DNA mismatch repair. May act as a 'molecular matchmaker', a protein that promotes the formation of a stable complex between two or more DNA-binding proteins in an ATP-dependent manner without itself being part of a final effector complex. The chain is DNA mismatch repair protein MutL from Clostridium botulinum (strain Kyoto / Type A2).